A 407-amino-acid chain; its full sequence is Serine/threonine transporter SstT (407 aa).

9 consecutive transmembrane segments (helical) span residues Gly-12–Ser-32, Leu-42–Ile-62, Ile-81–Phe-101, Ala-141–Leu-161, Val-179–Ala-199, Ile-218–Phe-238, Phe-245–Ala-267, Ile-288–Leu-308, and Ile-330–Ile-350.

The protein belongs to the dicarboxylate/amino acid:cation symporter (DAACS) (TC 2.A.23) family.

Its subcellular location is the cell inner membrane. It catalyses the reaction L-serine(in) + Na(+)(in) = L-serine(out) + Na(+)(out). It carries out the reaction L-threonine(in) + Na(+)(in) = L-threonine(out) + Na(+)(out). In terms of biological role, involved in the import of serine and threonine into the cell, with the concomitant import of sodium (symport system). In Campylobacter jejuni subsp. jejuni serotype O:2 (strain ATCC 700819 / NCTC 11168), this protein is Serine/threonine transporter SstT.